The following is a 53-amino-acid chain: UPF0391 membrane protein YPDSF_3201 (53 aa).

2 consecutive transmembrane segments (helical) span residues 4–24 (WGII…GGLA) and 27–47 (AAWA…ISLF).

Belongs to the UPF0391 family.

The protein resides in the cell membrane. The polypeptide is UPF0391 membrane protein YPDSF_3201 (Yersinia pestis (strain Pestoides F)).